A 553-amino-acid polypeptide reads, in one-letter code: Dihydroxy-acid dehydratase (553 aa).

[2Fe-2S] cluster is bound at residue Cys-49. A Mg(2+)-binding site is contributed by Asp-81. Cys-122 is a [2Fe-2S] cluster binding site. Mg(2+) is bound by residues Asp-123 and Lys-124. Lys-124 carries the post-translational modification N6-carboxylysine. Cys-194 serves as a coordination point for [2Fe-2S] cluster. Glu-444 lines the Mg(2+) pocket. Ser-470 functions as the Proton acceptor in the catalytic mechanism.

It belongs to the IlvD/Edd family. In terms of assembly, homodimer. [2Fe-2S] cluster serves as cofactor. Requires Mg(2+) as cofactor.

It catalyses the reaction (2R)-2,3-dihydroxy-3-methylbutanoate = 3-methyl-2-oxobutanoate + H2O. The catalysed reaction is (2R,3R)-2,3-dihydroxy-3-methylpentanoate = (S)-3-methyl-2-oxopentanoate + H2O. It functions in the pathway amino-acid biosynthesis; L-isoleucine biosynthesis; L-isoleucine from 2-oxobutanoate: step 3/4. The protein operates within amino-acid biosynthesis; L-valine biosynthesis; L-valine from pyruvate: step 3/4. Its function is as follows. Functions in the biosynthesis of branched-chain amino acids. Catalyzes the dehydration of (2R,3R)-2,3-dihydroxy-3-methylpentanoate (2,3-dihydroxy-3-methylvalerate) into 2-oxo-3-methylpentanoate (2-oxo-3-methylvalerate) and of (2R)-2,3-dihydroxy-3-methylbutanoate (2,3-dihydroxyisovalerate) into 2-oxo-3-methylbutanoate (2-oxoisovalerate), the penultimate precursor to L-isoleucine and L-valine, respectively. This is Dihydroxy-acid dehydratase from Aeropyrum pernix (strain ATCC 700893 / DSM 11879 / JCM 9820 / NBRC 100138 / K1).